The primary structure comprises 113 residues: Ribulose bisphosphate carboxylase small subunit (113 aa).

Belongs to the RuBisCO small chain family. Heterohexadecamer of 8 large and 8 small subunits. Forms a CsoS2-CsoS1-RuBisCO complex.

The protein localises to the carboxysome. RuBisCO catalyzes two reactions: the carboxylation of D-ribulose 1,5-bisphosphate, the primary event in carbon dioxide fixation, as well as the oxidative fragmentation of the pentose substrate in the photorespiration process. Both reactions occur simultaneously and in competition at the same active site. Although the small subunit is not catalytic it is essential for maximal activity. This chain is Ribulose bisphosphate carboxylase small subunit, found in Prochlorococcus marinus (strain MIT 9313).